We begin with the raw amino-acid sequence, 251 residues long: Large ribosomal subunit protein uL3 (251 aa).

2 disordered regions span residues 140–162 (SHRSIGSTGGRQDPGKTFKNKKM) and 229–251 (AAPAGAVQAAQAAPEAPAAEENA). Gln151 carries the post-translational modification N5-methylglutamine.

The protein belongs to the universal ribosomal protein uL3 family. In terms of assembly, part of the 50S ribosomal subunit. Forms a cluster with proteins L14 and L19. Post-translationally, methylated by PrmB.

In terms of biological role, one of the primary rRNA binding proteins, it binds directly near the 3'-end of the 23S rRNA, where it nucleates assembly of the 50S subunit. This is Large ribosomal subunit protein uL3 from Methylobacterium nodulans (strain LMG 21967 / CNCM I-2342 / ORS 2060).